A 473-amino-acid chain; its full sequence is Photosystem II CP43 reaction center protein (473 aa).

Positions 1–14 (MKTLYSLRRFYPVE) are excised as a propeptide. Threonine 15 carries the N-acetylthreonine modification. Threonine 15 carries the post-translational modification Phosphothreonine. 5 consecutive transmembrane segments (helical) span residues 69–93 (LFEVAHFVPEKPMYEQGLILLPHLA), 134–155 (LLGPETLEESFPFFGYVWKDRN), 178–200 (KALYFGGVYDTWAPGGGDVRKIT), 255–275 (KPFAWARRALVWSGEAYLSYS), and 291–312 (WFNNTAYPSEFYGPTGPEASQA). Residue glutamate 367 coordinates [CaMn4O5] cluster. Residues 447 to 471 (RARAAAAGFEKGIDRDFEPVLSMTP) form a helical membrane-spanning segment.

The protein belongs to the PsbB/PsbC family. PsbC subfamily. As to quaternary structure, PSII is composed of 1 copy each of membrane proteins PsbA, PsbB, PsbC, PsbD, PsbE, PsbF, PsbH, PsbI, PsbJ, PsbK, PsbL, PsbM, PsbT, PsbX, PsbY, PsbZ, Psb30/Ycf12, at least 3 peripheral proteins of the oxygen-evolving complex and a large number of cofactors. It forms dimeric complexes. It depends on Binds multiple chlorophylls and provides some of the ligands for the Ca-4Mn-5O cluster of the oxygen-evolving complex. It may also provide a ligand for a Cl- that is required for oxygen evolution. PSII binds additional chlorophylls, carotenoids and specific lipids. as a cofactor.

Its subcellular location is the plastid. The protein resides in the chloroplast thylakoid membrane. In terms of biological role, one of the components of the core complex of photosystem II (PSII). It binds chlorophyll and helps catalyze the primary light-induced photochemical processes of PSII. PSII is a light-driven water:plastoquinone oxidoreductase, using light energy to abstract electrons from H(2)O, generating O(2) and a proton gradient subsequently used for ATP formation. The polypeptide is Photosystem II CP43 reaction center protein (Vitis vinifera (Grape)).